A 231-amino-acid polypeptide reads, in one-letter code: NADH-ubiquinone oxidoreductase chain 4 (231 aa).

A run of 6 helical transmembrane segments spans residues 1-21, 34-54, 63-85, 89-111, 128-148, and 169-189; these read PIAG…YGII, MFLP…LTCL, IAYS…TPWG, AMAL…NTTY, ILPM…AIPP, and TIIL…HMLL.

The protein belongs to the complex I subunit 4 family.

The protein resides in the mitochondrion membrane. It carries out the reaction a ubiquinone + NADH + 5 H(+)(in) = a ubiquinol + NAD(+) + 4 H(+)(out). In terms of biological role, core subunit of the mitochondrial membrane respiratory chain NADH dehydrogenase (Complex I) that is believed to belong to the minimal assembly required for catalysis. Complex I functions in the transfer of electrons from NADH to the respiratory chain. The immediate electron acceptor for the enzyme is believed to be ubiquinone. This is NADH-ubiquinone oxidoreductase chain 4 (MT-ND4) from Bothrops bilineatus (Green jararaca).